The primary structure comprises 1476 residues: SH3 and multiple ankyrin repeat domains protein 2 (1476 aa).

Residues 66 to 76 (LSPQLLQQTPS) are compositionally biased toward polar residues. A disordered region spans residues 66-134 (LSPQLLQQTP…GANKDSLSTF (69 aa)). Residues 147-206 (VPGRLFVAVKPYQPQVDGEIPLHRGDRVKVLSIGEGGFWEGSARGHIGWFPAECVEEVQC) form the SH3 domain. Residue Val162 is modified to Phosphoserine. The PDZ domain occupies 247-341 (TVVLQKKDNE…HLILKVVTVT (95 aa)). A Phosphoserine modification is found at Ser372. The interval 391–412 (RKKKDKPEEIVPASKPSRTAEN) is disordered. A Phosphoserine modification is found at Ser456. Residue Thr485 is modified to Phosphothreonine. The disordered stretch occupies residues 503–533 (LSMPDTSEDIPPPPQSVPPSPPPPSPTTYNC). Residues 512–528 (IPPPPQSVPPSPPPPSP) show a composition bias toward pro residues. Phosphoserine is present on Ser586. Disordered stretches follow at residues 659–916 (TIIV…KDRR), 946–983 (VPMAGPPLEEEEDREDGDTKPDHSPSTVPEGVPKTEGA), and 1057–1153 (PALA…ESMD). Positions 666–678 (STSSSGKSSQGSS) are enriched in low complexity. The segment covering 711–722 (VRDREKRLEARR) has biased composition (basic and acidic residues). Position 724 is a phosphoserine (Ser724). The span at 783–795 (LGGGEAGAQGEAG) shows a compositional bias: gly residues. A compositionally biased stretch (low complexity) spans 833-846 (RLLDPSSPLALALS). 2 stretches are compositionally biased toward basic and acidic residues: residues 847–868 (ARDRAMQESQQGHKGEAPKADL) and 899–916 (RRQETENKYETDLGKDRR). Thr903 bears the Phosphothreonine mark. A compositionally biased stretch (polar residues) spans 1070–1085 (TSQPPTLNSSQPANST). Residues 1119-1130 (VDSRSSSDHHLE) are compositionally biased toward basic and acidic residues. A compositionally biased stretch (low complexity) spans 1131–1151 (TTSTISTVSSISTLSSEGGES). Residues 1169–1175 (PPVPPKP) carry the SH3-binding motif. 2 disordered regions span residues 1195-1216 (EDTDGFVIPPPAPPPPPGSAQA) and 1260-1403 (NRGK…ISNK). Residues 1202–1212 (IPPPAPPPPPG) show a composition bias toward pro residues. The segment covering 1291–1305 (STVSGTRSTTVTFTV) has biased composition (low complexity). Thr1292 carries O-linked (GlcNAc) threonine glycosylation. Residues 1307-1317 (PGTSQPITLQS) are compositionally biased toward polar residues. Ser1334 and Ser1338 each carry phosphoserine. Polar residues predominate over residues 1364–1375 (LSDVFSLPSQSP). Positions 1387–1401 (RSRSPSPSILQQPIS) are enriched in low complexity. One can recognise an SAM domain in the interval 1413–1476 (WTKPDVADWL…ERALKQLLDR (64 aa)).

This sequence belongs to the SHANK family. Is part of a complex with DLG4/PSD-95 and DLGAP1/GKAP. Interacts with CTTN/cortactin SH3 domain, DLGAP1/GKAP and alpha-latrotoxin receptor 1. Interacts with DNM2, DBNL, GRID2, BAIAP2, SLC9A3, PLCB3 and CFTR. Interacts (via proline-rich region) with PDE4D. Interacts with ABI1 (via SH3 domain). In terms of tissue distribution, detected in brain (at protein level), where it is highly expressed in Purkinje cells.

The protein localises to the apical cell membrane. It localises to the cytoplasm. The protein resides in the synapse. Its subcellular location is the postsynaptic density. It is found in the cell projection. The protein localises to the dendritic spine. It localises to the growth cone. In terms of biological role, seems to be an adapter protein in the postsynaptic density (PSD) of excitatory synapses that interconnects receptors of the postsynaptic membrane including NMDA-type and metabotropic glutamate receptors, and the actin-based cytoskeleton. May play a role in the structural and functional organization of the dendritic spine and synaptic junction. The sequence is that of SH3 and multiple ankyrin repeat domains protein 2 (Shank2) from Mus musculus (Mouse).